Consider the following 120-residue polypeptide: UPF0231 protein KPK_4613 (120 aa).

The protein belongs to the UPF0231 family.

In Klebsiella pneumoniae (strain 342), this protein is UPF0231 protein KPK_4613.